The primary structure comprises 510 residues: Olfactomedin-4 (510 aa).

The first 20 residues, 1–20 (MRPGLSFLLALLFFLGQAAG), serve as a signal peptide directing secretion. Asn-72 and Asn-136 each carry an N-linked (GlcNAc...) asparagine glycan. Residues 155 to 234 (DFELIKVEVK…ECEASKDQNT (80 aa)) are a coiled coil. An Olfactomedin-like domain is found at 245-507 (SCGHGGVVNI…LLNYDLSVLQ (263 aa)). A disulfide bridge connects residues Cys-246 and Cys-437. Residue Asn-253 is glycosylated (N-linked (GlcNAc...) asparagine).

Homomultimer; disulfide-linked. Interacts with NDUFA13. Interacts with cell surface lectins (locutions ricinus communis agglutinin I, concanavalin-A and wheat germ agglutinin) and cadherin. In terms of processing, N-glycosylated. Expressed during myeloid lineage development. Much higher expression in bone marrow neutrophils than in peripheral blood neutrophils (at protein level). Strongly expressed in the prostate, small intestine and colon and moderately expressed in the bone marrow and stomach. Overexpressed in some pancreatic cancer tissues.

It is found in the secreted. The protein resides in the extracellular space. The protein localises to the mitochondrion. May promote proliferation of pancreatic cancer cells by favoring the transition from the S to G2/M phase. In myeloid leukemic cell lines, inhibits cell growth and induces cell differentiation and apoptosis. May play a role in the inhibition of EIF4EBP1 phosphorylation/deactivation. Facilitates cell adhesion, most probably through interaction with cell surface lectins and cadherin. The sequence is that of Olfactomedin-4 (OLFM4) from Homo sapiens (Human).